We begin with the raw amino-acid sequence, 271 residues long: Glutamate racemase (271 aa).

Residues 10–11 and 42–43 contribute to the substrate site; these read DS and YG. C74 functions as the Proton donor/acceptor in the catalytic mechanism. Residue 75 to 76 coordinates substrate; it reads NT. The Proton donor/acceptor role is filled by C189. Residue 190–191 coordinates substrate; that stretch reads TH.

It belongs to the aspartate/glutamate racemases family.

The catalysed reaction is L-glutamate = D-glutamate. The protein operates within cell wall biogenesis; peptidoglycan biosynthesis. Provides the (R)-glutamate required for cell wall biosynthesis. This Bartonella bacilliformis (strain ATCC 35685 / KC583 / Herrer 020/F12,63) protein is Glutamate racemase.